The primary structure comprises 367 residues: N-acetylmuramoyl-L-alanine amidase BlyA (367 aa).

An N-acetylmuramoyl-L-alanine amidase domain is found at 24-158; the sequence is VKKCVLHYTA…DITHKNCPAP (135 aa). The segment at 178-204 is disordered; that stretch reads SGKSVSKASPTKPTTSSPSSSSAVSGS. Residues 180–204 are compositionally biased toward low complexity; that stretch reads KSVSKASPTKPTTSSPSSSSAVSGS. SH3b domains follow at residues 202 to 271 and 298 to 367; these read SGSL…YVDV and GKIK…GSTI.

Belongs to the N-acetylmuramoyl-L-alanine amidase 2 family.

It localises to the secreted. The catalysed reaction is Hydrolyzes the link between N-acetylmuramoyl residues and L-amino acid residues in certain cell-wall glycopeptides.. Functionally, autolysins are involved in some important biological processes such as cell separation, cell-wall turnover, competence for genetic transformation, formation of the flagella and sporulation. Involved in prophage SP-beta-mediated cell lysis. The protein is N-acetylmuramoyl-L-alanine amidase BlyA (blyA) of Bacillus subtilis (strain 168).